The primary structure comprises 316 residues: Phosphate acyltransferase (316 aa).

Belongs to the PlsX family. As to quaternary structure, homodimer. Probably interacts with PlsY.

The protein resides in the cytoplasm. The catalysed reaction is a fatty acyl-[ACP] + phosphate = an acyl phosphate + holo-[ACP]. Its pathway is lipid metabolism; phospholipid metabolism. In terms of biological role, catalyzes the reversible formation of acyl-phosphate (acyl-PO(4)) from acyl-[acyl-carrier-protein] (acyl-ACP). This enzyme utilizes acyl-ACP as fatty acyl donor, but not acyl-CoA. In Chlamydia abortus (strain DSM 27085 / S26/3) (Chlamydophila abortus), this protein is Phosphate acyltransferase.